A 379-amino-acid chain; its full sequence is Glutamate 5-kinase (379 aa).

Lysine 19 serves as a coordination point for ATP. Substrate is bound by residues serine 59, aspartate 146, and asparagine 158. ATP is bound by residues 178–179 (TD) and 220–226 (TGGMATK). Residues 285 to 363 (SGDIIIDDGA…KDIISILGHD (79 aa)) form the PUA domain.

This sequence belongs to the glutamate 5-kinase family.

It is found in the cytoplasm. It catalyses the reaction L-glutamate + ATP = L-glutamyl 5-phosphate + ADP. It functions in the pathway amino-acid biosynthesis; L-proline biosynthesis; L-glutamate 5-semialdehyde from L-glutamate: step 1/2. Functionally, catalyzes the transfer of a phosphate group to glutamate to form L-glutamate 5-phosphate. This Vibrio parahaemolyticus serotype O3:K6 (strain RIMD 2210633) protein is Glutamate 5-kinase.